Here is a 555-residue protein sequence, read N- to C-terminus: Potassium-transporting ATPase potassium-binding subunit (555 aa).

The next 10 membrane-spanning stretches (helical) occupy residues 2–22, 60–80, 130–150, 173–193, 246–266, 278–298, 374–394, 412–432, 483–503, and 525–545; these read IWVAVVITMLLFILVAKPTGI, QYALSLVLLNGFMIVVVYFIF, IGITFLMFAAPATTLALVMAF, VFLPIAFMAALVFVALGVPQT, MSNILQMMLMMLLPTALPFTY, ILFVSLFMVFLLGFITITTSE, AGFVNIIMYAIIAVFISGLMV, LIAVTILFHPLLILGFSALAL, LVMFLGRYFSLITMLAVAASL, and GIFIGTIVIVGALTFFPMLVL.

The protein belongs to the KdpA family. In terms of assembly, the system is composed of three essential subunits: KdpA, KdpB and KdpC.

Its subcellular location is the cell membrane. Functionally, part of the high-affinity ATP-driven potassium transport (or Kdp) system, which catalyzes the hydrolysis of ATP coupled with the electrogenic transport of potassium into the cytoplasm. This subunit binds the extracellular potassium ions and delivers the ions to the membrane domain of KdpB through an intramembrane tunnel. The protein is Potassium-transporting ATPase potassium-binding subunit of Bacillus cereus (strain Q1).